We begin with the raw amino-acid sequence, 238 residues long: Fatty acid metabolism regulator protein (238 aa).

One can recognise an HTH gntR-type domain in the interval 6-74 (QSPAGFAEEY…HGKPTKVNNF (69 aa)). Residues 34–53 (ERELSELIGVTRTTLREVLQ) constitute a DNA-binding region (H-T-H motif).

Homodimer.

Its subcellular location is the cytoplasm. Multifunctional regulator of fatty acid metabolism. The chain is Fatty acid metabolism regulator protein from Erwinia tasmaniensis (strain DSM 17950 / CFBP 7177 / CIP 109463 / NCPPB 4357 / Et1/99).